Reading from the N-terminus, the 520-residue chain is Developmental regulatory protein wetA (520 aa).

Disordered stretches follow at residues 110–149 (ATHA…NERR), 260–294 (HPSS…SWQS), 388–453 (TTSQ…GSNK), and 471–496 (LTGV…RRRK). Low complexity predominate over residues 261–294 (PSSSTLTNSSPSSADDMFSSSHSSDPHSLSSWQS). Positions 388 to 401 (TTSQVHNVSRSPSL) are enriched in polar residues. Over residues 420 to 429 (PVHRRTHSRK) the composition is skewed to basic residues. The span at 436–453 (NAPKPAKASGSSSRGSNK) shows a compositional bias: low complexity.

Belongs to the wetA family.

In terms of biological role, brlA, abaA and wetA are pivotal regulators of conidiophore development and conidium maturation. They act individually and together to regulate their own expression and that of numerous other sporulation-specific genes. Plays a crucial role in pigmentation and conidial cell wall integrity. This is Developmental regulatory protein wetA from Penicillium digitatum (strain PHI26 / CECT 20796) (Green mold).